A 639-amino-acid polypeptide reads, in one-letter code: Tetracycline resistance protein TetW (639 aa).

Positions 1–243 (MKIINIGILA…VTGLFQPIGE (243 aa)) constitute a tr-type G domain. GTP contacts are provided by residues 10 to 17 (AHVDAGKT), 74 to 78 (DTPGH), and 128 to 131 (NKID).

Belongs to the TRAFAC class translation factor GTPase superfamily. Classic translation factor GTPase family. TetM/TetO subfamily.

Functionally, abolishes the inhibitory effect of tetracyclin on protein synthesis by a non-covalent modification of the ribosomes. This Butyrivibrio fibrisolvens protein is Tetracycline resistance protein TetW (tetW).